The primary structure comprises 118 residues: UPF0342 protein BCG9842_B4422 (118 aa).

This sequence belongs to the UPF0342 family.

The protein is UPF0342 protein BCG9842_B4422 of Bacillus cereus (strain G9842).